The chain runs to 101 residues: NADH-quinone oxidoreductase subunit K (101 aa).

3 helical membrane-spanning segments follow: residues 4–24 (VGHYLAVSAVLFTLGVLGIFI), 29–49 (IIVILMAIELILLAVNINLVA), and 65–85 (FVLTVAAGEAAIGLAILVIYF).

The protein belongs to the complex I subunit 4L family. In terms of assembly, NDH-1 is composed of 14 different subunits. Subunits NuoA, H, J, K, L, M, N constitute the membrane sector of the complex.

It localises to the cell inner membrane. The enzyme catalyses a quinone + NADH + 5 H(+)(in) = a quinol + NAD(+) + 4 H(+)(out). Functionally, NDH-1 shuttles electrons from NADH, via FMN and iron-sulfur (Fe-S) centers, to quinones in the respiratory chain. The immediate electron acceptor for the enzyme in this species is believed to be ubiquinone. Couples the redox reaction to proton translocation (for every two electrons transferred, four hydrogen ions are translocated across the cytoplasmic membrane), and thus conserves the redox energy in a proton gradient. In Sphingopyxis alaskensis (strain DSM 13593 / LMG 18877 / RB2256) (Sphingomonas alaskensis), this protein is NADH-quinone oxidoreductase subunit K.